The following is a 335-amino-acid chain: tRNA N6-adenosine threonylcarbamoyltransferase (335 aa).

Positions 110 and 114 each coordinate Fe cation. Substrate contacts are provided by residues L132–G136, D165, G178, and N271. D299 is a Fe cation binding site.

The protein belongs to the KAE1 / TsaD family. It depends on Fe(2+) as a cofactor.

Its subcellular location is the cytoplasm. The catalysed reaction is L-threonylcarbamoyladenylate + adenosine(37) in tRNA = N(6)-L-threonylcarbamoyladenosine(37) in tRNA + AMP + H(+). In terms of biological role, required for the formation of a threonylcarbamoyl group on adenosine at position 37 (t(6)A37) in tRNAs that read codons beginning with adenine. Is involved in the transfer of the threonylcarbamoyl moiety of threonylcarbamoyl-AMP (TC-AMP) to the N6 group of A37, together with TsaE and TsaB. TsaD likely plays a direct catalytic role in this reaction. This Campylobacter jejuni subsp. jejuni serotype O:6 (strain 81116 / NCTC 11828) protein is tRNA N6-adenosine threonylcarbamoyltransferase.